Reading from the N-terminus, the 461-residue chain is Cysteine--tRNA ligase (461 aa).

Cys30 is a Zn(2+) binding site. Residues 32-42 carry the 'HIGH' region motif; it reads VTIYDLCHIGH. Zn(2+)-binding residues include Cys211, His236, and Glu240. A 'KMSKS' region motif is present at residues 268–272; the sequence is KMSKS. Lys271 serves as a coordination point for ATP.

The protein belongs to the class-I aminoacyl-tRNA synthetase family. Monomer. The cofactor is Zn(2+).

It localises to the cytoplasm. The catalysed reaction is tRNA(Cys) + L-cysteine + ATP = L-cysteinyl-tRNA(Cys) + AMP + diphosphate. This chain is Cysteine--tRNA ligase, found in Shewanella sp. (strain W3-18-1).